Consider the following 874-residue polypeptide: Alanine--tRNA ligase (874 aa).

Residues His-564, His-568, Cys-665, and His-669 each coordinate Zn(2+).

Belongs to the class-II aminoacyl-tRNA synthetase family. Requires Zn(2+) as cofactor.

It is found in the cytoplasm. The catalysed reaction is tRNA(Ala) + L-alanine + ATP = L-alanyl-tRNA(Ala) + AMP + diphosphate. Functionally, catalyzes the attachment of alanine to tRNA(Ala) in a two-step reaction: alanine is first activated by ATP to form Ala-AMP and then transferred to the acceptor end of tRNA(Ala). Also edits incorrectly charged Ser-tRNA(Ala) and Gly-tRNA(Ala) via its editing domain. The sequence is that of Alanine--tRNA ligase from Burkholderia orbicola (strain MC0-3).